Consider the following 347-residue polypeptide: NADH-ubiquinone oxidoreductase chain 2 (347 aa).

10 helical membrane passes run Met-1 to Ala-21, His-25 to Met-45, Tyr-59 to Val-79, Phe-111 to Leu-131, Ile-149 to Gly-169, Ile-178 to Pro-198, Thr-201 to Leu-221, Met-237 to Leu-257, Val-276 to Leu-296, and Leu-326 to Leu-346.

This sequence belongs to the complex I subunit 2 family. In terms of assembly, core subunit of respiratory chain NADH dehydrogenase (Complex I) which is composed of 45 different subunits. Interacts with TMEM242.

Its subcellular location is the mitochondrion inner membrane. The catalysed reaction is a ubiquinone + NADH + 5 H(+)(in) = a ubiquinol + NAD(+) + 4 H(+)(out). Core subunit of the mitochondrial membrane respiratory chain NADH dehydrogenase (Complex I) which catalyzes electron transfer from NADH through the respiratory chain, using ubiquinone as an electron acceptor. Essential for the catalytic activity and assembly of complex I. The sequence is that of NADH-ubiquinone oxidoreductase chain 2 from Pteropus pumilus (Little golden-mantled flying fox).